We begin with the raw amino-acid sequence, 306 residues long: D-alanine--D-alanine ligase (306 aa).

The region spanning 107–300 (KAAYRTAGLP…FGQLCAWLVE (194 aa)) is the ATP-grasp domain. 134–184 (IAPPYVVKPNNEGSSVGIYIVHEATNSPPQLSEEMPAQVMVEAYAPGREMT) contacts ATP. Mg(2+)-binding residues include Asp-251, Glu-267, and Asn-269.

The protein belongs to the D-alanine--D-alanine ligase family. The cofactor is Mg(2+). Mn(2+) is required as a cofactor.

It is found in the cytoplasm. It catalyses the reaction 2 D-alanine + ATP = D-alanyl-D-alanine + ADP + phosphate + H(+). Its pathway is cell wall biogenesis; peptidoglycan biosynthesis. In terms of biological role, cell wall formation. The protein is D-alanine--D-alanine ligase of Ruegeria sp. (strain TM1040) (Silicibacter sp.).